The primary structure comprises 378 residues: AA13 family lytic polysaccharide monooxygenase A (378 aa).

An N-terminal signal peptide occupies residues 1 to 17 (MKWSVIQALALASGVQA). Histidine 18 contacts Cu(2+). Position 18 is a methylhistidine (histidine 18). The Chitin-binding type-4 domain maps to 18–244 (HGYLTFPMSR…PQIYLTCADI (227 aa)). Disulfide bonds link cysteine 39–cysteine 42, cysteine 65–cysteine 241, cysteine 101–cysteine 199, cysteine 117–cysteine 144, cysteine 152–cysteine 160, cysteine 166–cysteine 172, and cysteine 180–cysteine 188. Histidine 108 lines the Cu(2+) pocket. A glycan (N-linked (GlcNAc...) asparagine) is linked at asparagine 221. Tyrosine 238 provides a ligand contact to Cu(2+). The segment covering 250-263 (DSQSPPTTTTTSTP) has biased composition (low complexity). Residues 250–272 (DSQSPPTTTTTSTPASPPPTSCA) form a disordered region. In terms of domain architecture, CBM20 spans 272 to 378 (ATPAASVAVT…GTATVDTAWK (107 aa)).

This sequence belongs to the polysaccharide monooxygenase AA13 family. Cu(2+) is required as a cofactor. O-mannosylated.

Its subcellular location is the secreted. It carries out the reaction starch + reduced acceptor + O2 = D-glucono-1,5-lactone-terminated malto-oligosaccharides + short-chain malto-oligosaccharides + acceptor + H2O.. Its activity is regulated as follows. Activity is inhibited by both beta-cyclodextrin or amylose that block the access to the active site. Functionally, starch-active lytic polysaccharide monooxygenase that oxidizes the C1 position of starch substrates. Catalysis by LPMOs requires the reduction of the active-site copper from Cu(II) to Cu(I) by a reducing agent and H(2)O(2) or O(2) as a cosubstrate. This is AA13 family lytic polysaccharide monooxygenase A from Pyricularia oryzae (strain 70-15 / ATCC MYA-4617 / FGSC 8958) (Rice blast fungus).